We begin with the raw amino-acid sequence, 373 residues long: ATP synthase gamma chain 1, chloroplastic (373 aa).

The N-terminal 50 residues, 1 to 50, are a transit peptide targeting the chloroplast; sequence MACSNLTTMWVSSKPSLSADSSSLSFRSVLKCPTNTSSPPSRASSVSPLQ. Residue cysteine 139 is part of the active site. A disulfide bridge links cysteine 249 with cysteine 255. Serine 347 is modified (phosphoserine).

The protein belongs to the ATPase gamma chain family. As to quaternary structure, F-type ATPases have 2 components, CF(1) - the catalytic core - and CF(0) - the membrane proton channel. CF(1) has five subunits: alpha(3), beta(3), gamma(1), delta(1), epsilon(1). CF(0) has four main subunits: a, b, b' and c. Interacts with PAB.

The protein localises to the plastid. It localises to the chloroplast thylakoid membrane. Its function is as follows. Produces ATP from ADP in the presence of a proton gradient across the membrane. The gamma chain is believed to be important in regulating ATPase activity and the flow of protons through the CF(0) complex. This is ATP synthase gamma chain 1, chloroplastic (ATPC1) from Arabidopsis thaliana (Mouse-ear cress).